A 746-amino-acid polypeptide reads, in one-letter code: MNLFWPSETKKQNEIPGGDYTPGNSPSVQKGYQFLNRDIFKSCPRIMERQFGECLHNRTHLIKDLISSGNVGLGPIEIVHMSYLNKHEKEEFGEYFYVTGIEVSGPAMPVEFLEVLKSSKRISKNISNNIILTYCCFNFFSNLDIRIRYDADDTFQTTAIDCNKETTDLTMTEKMWEETFASSVIRAIITNTNPELKPPGLVECPFYVGKDTISSCKKIIELLCRFLPRSLNCGWDSTKSMQATIVNNYLMYSLKSFIAITPSLVDFTIDYLKGLTKKDPIHDIYYKTAMITILDHIETKELDMITILNETLDPLLSLLNDLPPRDADSARLMNCMSDLLNIQTNFLLNRGDYELALGVSNTSTELALDSFESWYNLARCHIKKEEYEKALFAINSMPRLRKNDGHLETMYSRFLTSNYYKKPLNGTREHYDLTAMEFTNLSGTLRNWKEDELKRQIFGRIAMINEKKIGYTKEIWDDIAIKLGPICGPQSVNLINYVSPQEVKNIKNINLIARNTIGKQLGWFSGKIYGLLMEIVNKIGWNGLLNIRTEAFMMETEFYQASNNIIDENGHIPMESRKKRFCEGWLDDLFLDLYQDLKLSKISLSNKDEKHSGLEWELLGLIMLRTWHWEDAVACLRTSIVARFDPVSCQQLLKIYLQPPKNIQEVTLLDTDTIISLLIKKISYDCRYYNYCQIFNLQLLEKLCNELGTHILRNKILLQPSIGDEIMVMIDAMLAWIADLDHTVQP.

The disordered stretch occupies residues 1-25; the sequence is MNLFWPSETKKQNEIPGGDYTPGNS. A CHS5-binding region spans residues 734 to 746; that stretch reads LAWIADLDHTVQP.

Belongs to the CHAPS family. In terms of assembly, component of the CHS5/6 complex composed of the 4 CHAPS proteins BCH1, BCH2, BUD7, and CHS6 as well as at least CHS5 and GTP-bound ARF1. The complex interacts with the cargo protein CHS3.

The protein localises to the golgi apparatus. Its subcellular location is the trans-Golgi network membrane. Member of the CHS5-ARF1P-binding proteins (CHAPS) which mediates export of specific cargo proteins, including chitin synthase CHS3. This chain is Chitin biosynthesis protein CHS6 (CHS6), found in Saccharomyces cerevisiae (strain ATCC 204508 / S288c) (Baker's yeast).